The chain runs to 362 residues: Uroporphyrinogen decarboxylase (362 aa).

Substrate contacts are provided by residues 39-43 (RQAGR), aspartate 88, tyrosine 165, threonine 220, and histidine 334.

It belongs to the uroporphyrinogen decarboxylase family. In terms of assembly, homodimer.

The protein localises to the cytoplasm. It catalyses the reaction uroporphyrinogen III + 4 H(+) = coproporphyrinogen III + 4 CO2. It functions in the pathway porphyrin-containing compound metabolism; protoporphyrin-IX biosynthesis; coproporphyrinogen-III from 5-aminolevulinate: step 4/4. In terms of biological role, catalyzes the decarboxylation of four acetate groups of uroporphyrinogen-III to yield coproporphyrinogen-III. This is Uroporphyrinogen decarboxylase from Synechococcus sp. (strain JA-3-3Ab) (Cyanobacteria bacterium Yellowstone A-Prime).